Consider the following 183-residue polypeptide: Ribulose bisphosphate carboxylase small subunit, chloroplastic (183 aa).

The N-terminal 59 residues, 1 to 59, are a transit peptide targeting the chloroplast; the sequence is MASSMISSGTVATVSADRPAPAQARMVAPFNGLKSSSAFPVTRKSNDITSIASNGGRVQ.

The protein belongs to the RuBisCO small chain family. In terms of assembly, heterohexadecamer of 8 large and 8 small subunits.

The protein resides in the plastid. It localises to the chloroplast. Its function is as follows. RuBisCO catalyzes two reactions: the carboxylation of D-ribulose 1,5-bisphosphate, the primary event in carbon dioxide fixation, as well as the oxidative fragmentation of the pentose substrate. Both reactions occur simultaneously and in competition at the same active site. Although the small subunit is not catalytic it is essential for maximal activity. In Pyrus pyrifolia (Chinese pear), this protein is Ribulose bisphosphate carboxylase small subunit, chloroplastic.